We begin with the raw amino-acid sequence, 407 residues long: MYTAKEVILSQIKPALGCTEPAAIALNGAYLKEYVKNAKKIQLTINTNLMKNAMYVPIPNTGKKFGVKLAFALGYLCGDKTKGLNVFENIDKKCIEEAEKYINKIELDIVEGREIYIKSEAEGCEVITKKFHDYISSIKTSEKVITFESKNIDNNISDTEKWLKKISFDTLYRLIEKEKDFDFVKNAVDVNFELSKIGLNSDCGLNIGKSYKGDDIFSKIVSITVSASDARMEGVNYPAMSLVGSGNHGISAILPVWVYGKEKNFQENEIFKAVALSMLITIYIKLFIGRLSAICGAAFASGCGVAGGIAYLESNNKEVSKKAVSYVIQDINGVICDGAKMACSLKVRLGAKSGYEAAMFALEGKPVFSDGILENDITKSIQNLSRVSEAMYNVDGSIVEIMKNKII.

Belongs to the UPF0597 family.

This chain is UPF0597 protein NAMH_0191, found in Nautilia profundicola (strain ATCC BAA-1463 / DSM 18972 / AmH).